A 142-amino-acid polypeptide reads, in one-letter code: MKFYLYLSILLILLTSTSFGDIWSNCGPNEKFKITSVSIVPDPPVKGKLITISGSGVLGENLTSGQVAILVKFGLITLINEKKDICTLPGSPYKCPIKEGEYSHTINFTIPEAAPNGKYTGHVSVTDQESSEIACIDVTLTL.

A signal peptide spans M1 to G20.

Belongs to the NPC2 family. In terms of assembly, monomer.

Functionally, catalyzes the intermembrane transfer of phosphatidylglycerol and phosphatidylinositol. The sequence is that of Putative phosphatidylglycerol/phosphatidylinositol transfer protein 2 from Dictyostelium discoideum (Social amoeba).